A 188-amino-acid polypeptide reads, in one-letter code: Elongation factor P (188 aa).

The protein belongs to the elongation factor P family.

The protein localises to the cytoplasm. Its pathway is protein biosynthesis; polypeptide chain elongation. Functionally, involved in peptide bond synthesis. Stimulates efficient translation and peptide-bond synthesis on native or reconstituted 70S ribosomes in vitro. Probably functions indirectly by altering the affinity of the ribosome for aminoacyl-tRNA, thus increasing their reactivity as acceptors for peptidyl transferase. The polypeptide is Elongation factor P (Rickettsia peacockii (strain Rustic)).